We begin with the raw amino-acid sequence, 385 residues long: Acyl-CoA dehydrogenase IpdE1 (385 aa).

Residues Gln126 to Ser129 and Ser161 each bind FAD. Glu244 (proton acceptor) is an active-site residue. Ser364–Glu366 lines the FAD pocket.

Belongs to the acyl-CoA dehydrogenase family. In terms of assembly, heterotetramer composed of 2 IpdE1 subunits and 2 IpdE2 subunits. Requires FAD as cofactor.

It catalyses the reaction 3-[(3aS,4S,5R,7aS)-5-hydroxy-7a-methyl-1-oxo-octahydro-1H-inden-4-yl]propanoyl-CoA + A = (2E)-3-[(3aS,4S,5R,7aS)-5-hydroxy-7a-methyl-1-oxo-octahydro-1H-inden-4-yl]prop-2-enoyl-CoA + AH2. It participates in steroid metabolism; cholesterol degradation. Functionally, involved in cholesterol degradation. Catalyzes the dehydrogenation of 5OH-HIP-CoA to 5OH-HIPE-CoA. Can also use octanoyl-CoA and dihydroferuloyl-CoA, with lower efficiency. Cannot use 3-oxo-4-pregnene-20-carboxyl-CoA (3-OPC-CoA). In Mycobacterium tuberculosis (strain ATCC 25618 / H37Rv), this protein is Acyl-CoA dehydrogenase IpdE1.